The primary structure comprises 546 residues: Chaperonin GroEL 2 (546 aa).

Residues T30–P33, K51, D87–T91, G415, and D495 contribute to the ATP site. Residues D527–F546 form a disordered region. Residues G535–F546 show a composition bias toward gly residues.

This sequence belongs to the chaperonin (HSP60) family. As to quaternary structure, forms a cylinder of 14 subunits composed of two heptameric rings stacked back-to-back. Interacts with the co-chaperonin GroES.

The protein localises to the cytoplasm. It carries out the reaction ATP + H2O + a folded polypeptide = ADP + phosphate + an unfolded polypeptide.. Its function is as follows. Together with its co-chaperonin GroES, plays an essential role in assisting protein folding. The GroEL-GroES system forms a nano-cage that allows encapsulation of the non-native substrate proteins and provides a physical environment optimized to promote and accelerate protein folding. This chain is Chaperonin GroEL 2, found in Burkholderia ambifaria (strain ATCC BAA-244 / DSM 16087 / CCUG 44356 / LMG 19182 / AMMD) (Burkholderia cepacia (strain AMMD)).